The primary structure comprises 196 residues: UMP-CMP kinase (196 aa).

Residue 13-18 (GAGKGT) coordinates ATP. The residue at position 33 (serine 33) is a Phosphoserine. The tract at residues 33–63 (SAGELLRDERKNPDSQYGELIEKYIKEGKIV) is NMP. Arginine 39 is a binding site for a ribonucleoside 5'-phosphate. N6-acetyllysine occurs at positions 43 and 55. 61–63 (KIV) contacts a ribonucleoside 5'-phosphate. Lysine 73 is covalently cross-linked (Glycyl lysine isopeptide (Lys-Gly) (interchain with G-Cter in SUMO2)). 93–96 (GFPR) contacts a ribonucleoside 5'-phosphate. CMP is bound at residue asparagine 100. Residue lysine 106 is modified to N6-succinyllysine. The tract at residues 133-143 (ERGKSSGRSDD) is LID. Residue arginine 134 participates in ATP binding. Positions 140 and 151 each coordinate a ribonucleoside 5'-phosphate. Lysine 179 contacts ATP. Residue serine 180 is modified to Phosphoserine.

It belongs to the adenylate kinase family. UMP-CMP kinase subfamily. As to quaternary structure, monomer. It depends on Mg(2+) as a cofactor.

Its subcellular location is the nucleus. The protein resides in the cytoplasm. It catalyses the reaction CMP + ATP = CDP + ADP. It carries out the reaction dCMP + ATP = dCDP + ADP. The enzyme catalyses UMP + ATP = UDP + ADP. The catalysed reaction is a 2'-deoxyribonucleoside 5'-diphosphate + ATP = a 2'-deoxyribonucleoside 5'-triphosphate + ADP. It catalyses the reaction a ribonucleoside 5'-diphosphate + ATP = a ribonucleoside 5'-triphosphate + ADP. Its function is as follows. Catalyzes the phosphorylation of pyrimidine nucleoside monophosphates at the expense of ATP. Plays an important role in de novo pyrimidine nucleotide biosynthesis. Has preference for UMP and CMP as phosphate acceptors. Also displays broad nucleoside diphosphate kinase activity. In Rattus norvegicus (Rat), this protein is UMP-CMP kinase (Cmpk1).